The primary structure comprises 124 residues: Small ribosomal subunit protein uS12 (124 aa).

Residues 1 to 22 (MATINQLVRKPRKRKVAKSDVP) are disordered. A 3-methylthioaspartic acid modification is found at D89. Residues 101-124 (TLDTQGVQNRKQGRSKYGAKRPKS) form a disordered region. Positions 111–124 (KQGRSKYGAKRPKS) are enriched in basic residues.

The protein belongs to the universal ribosomal protein uS12 family. In terms of assembly, part of the 30S ribosomal subunit. Contacts proteins S8 and S17. May interact with IF1 in the 30S initiation complex.

Its function is as follows. With S4 and S5 plays an important role in translational accuracy. Interacts with and stabilizes bases of the 16S rRNA that are involved in tRNA selection in the A site and with the mRNA backbone. Located at the interface of the 30S and 50S subunits, it traverses the body of the 30S subunit contacting proteins on the other side and probably holding the rRNA structure together. The combined cluster of proteins S8, S12 and S17 appears to hold together the shoulder and platform of the 30S subunit. This Marinobacter nauticus (strain ATCC 700491 / DSM 11845 / VT8) (Marinobacter aquaeolei) protein is Small ribosomal subunit protein uS12.